An 82-amino-acid polypeptide reads, in one-letter code: uncharacterized protein (82 aa).

A disordered region spans residues 1–20 (MMNLSPPFKSPSGSSRAGRR).

This is an uncharacterized protein from Archaeoglobus fulgidus (strain ATCC 49558 / DSM 4304 / JCM 9628 / NBRC 100126 / VC-16).